A 181-amino-acid chain; its full sequence is Ribosome-recycling factor (181 aa).

The disordered stretch occupies residues R131–N154.

The protein belongs to the RRF family.

Its subcellular location is the cytoplasm. Functionally, responsible for the release of ribosomes from messenger RNA at the termination of protein biosynthesis. May increase the efficiency of translation by recycling ribosomes from one round of translation to another. The polypeptide is Ribosome-recycling factor (Leuconostoc citreum (strain KM20)).